The chain runs to 92 residues: Acylphosphatase (92 aa).

The Acylphosphatase-like domain occupies 6 to 92; sequence RMYVIVYGIV…TGEFASFDTY (87 aa). Catalysis depends on residues Arg21 and Asn39.

Belongs to the acylphosphatase family.

The enzyme catalyses an acyl phosphate + H2O = a carboxylate + phosphate + H(+). This chain is Acylphosphatase (acyP), found in Sulfolobus acidocaldarius (strain ATCC 33909 / DSM 639 / JCM 8929 / NBRC 15157 / NCIMB 11770).